The sequence spans 173 residues: Large ribosomal subunit protein uL29c (173 aa).

Residues 1-60 (MLSLSIATPGTAAIFRRGTASATSTSSSFHGVRIQHQVSARVPAAATISSSSPKPSVVMM) constitute a chloroplast transit peptide. The segment at 143–173 (KKSIVPRPPPSLKKLQEEEAAEEAAEAAKSA) is disordered. Serine 172 carries the phosphoserine modification.

This sequence belongs to the universal ribosomal protein uL29 family. Part of the 50S ribosomal subunit.

It is found in the plastid. Its subcellular location is the chloroplast. This Arabidopsis thaliana (Mouse-ear cress) protein is Large ribosomal subunit protein uL29c (RPL29).